Here is a 333-residue protein sequence, read N- to C-terminus: Meiotic recombination protein rec24 (333 aa).

This sequence belongs to the MEI4L family. Interacts with Rec7, as part of the meiotic recombination initiation complex.

It localises to the cytoplasm. The protein resides in the nucleus. Required for correct meiotic chromosome segregation and recombination. Accessory protein required for Rec12 activity, which is involved in formation of the double-strand breaks (DSBs) that initiate meiotic recombination. This is Meiotic recombination protein rec24 (rec24) from Schizosaccharomyces pombe (strain 972 / ATCC 24843) (Fission yeast).